We begin with the raw amino-acid sequence, 489 residues long: Rhamnulokinase (489 aa).

Residue alanine 13–arginine 17 coordinates ATP. Cysteine 68 and cysteine 222 are joined by a disulfide. Residues glycine 83 and histidine 236–threonine 238 each bind substrate. The active-site Proton acceptor is aspartate 237. Residue threonine 259 coordinates ATP. Asparagine 296 serves as a coordination point for substrate. Glutamine 304 is a binding site for ATP. A disulfide bridge links cysteine 353 with cysteine 370. Glycine 402 provides a ligand contact to ATP. Cysteine 413 and cysteine 417 are disulfide-bonded.

Belongs to the rhamnulokinase family. Monomer. Mg(2+) serves as cofactor.

The enzyme catalyses L-rhamnulose + ATP = L-rhamnulose 1-phosphate + ADP + H(+). It participates in carbohydrate degradation; L-rhamnose degradation; glycerone phosphate from L-rhamnose: step 2/3. Involved in the catabolism of L-rhamnose (6-deoxy-L-mannose). Catalyzes the transfer of the gamma-phosphate group from ATP to the 1-hydroxyl group of L-rhamnulose to yield L-rhamnulose 1-phosphate. In Escherichia coli (strain 55989 / EAEC), this protein is Rhamnulokinase.